The chain runs to 1346 residues: Proline-rich protein 36 (1346 aa).

Disordered regions lie at residues 1–403, 426–512, 537–606, 633–679, 711–1155, and 1168–1240; these read MDNK…TQLI, SVSS…QATP, PLTT…PSPL, PRQT…VSPL, LETQ…AELA, and PPLA…RSPK. The span at 10-26 shows a compositional bias: low complexity; the sequence is AGAAARTPAARAPGLLT. Over residues 27-40 the composition is skewed to pro residues; that stretch reads PRPPGSPRPPPPVT. Low complexity-rich tracts occupy residues 41 to 55 and 86 to 97; these read PAAL…AVGR and SSRNPASRPPAS. Basic and acidic residues predominate over residues 137-152; it reads SAEETVARGKATEAPK. Residues 165 to 177 show a composition bias toward low complexity; it reads SGPTPGTPSPAMA. The span at 191 to 203 shows a compositional bias: pro residues; it reads RPAPSARPRPPTE. Over residues 208–220 the composition is skewed to polar residues; it reads SVSSASEHSTTEP. Low complexity-rich tracts occupy residues 235-255 and 293-312; these read QRPA…PARS and APAL…PSGT. Pro residues-rich tracts occupy residues 329–343, 371–380, and 387–397; these read ATLP…PPPA, PLAPPSPSAP, and PSPPATPPSQV. The segment covering 426-464 has biased composition (low complexity); the sequence is SVSSPLQSMPPTQANPALPSLPTLLSPLATPPLSAMSPL. Residues 494–506 show a composition bias toward pro residues; the sequence is TPPPQASPSPSPP. The segment covering 546 to 558 has biased composition (low complexity); that stretch reads PPLVSPSLLASPP. A compositionally biased stretch (pro residues) spans 559-578; that stretch reads LQAPPHPQAPPSMTTPPMQA. Positions 633–647 are enriched in polar residues; sequence PRQTQASLISPSRPA. A compositionally biased stretch (pro residues) spans 648–657; it reads STPPDSPPLQ. The segment covering 658–679 has biased composition (low complexity); the sequence is APLSLPASPPLQTSLSPAVSPL. A compositionally biased stretch (polar residues) spans 724–733; sequence TPPASLTTPP. Composition is skewed to pro residues over residues 781-821 and 829-865; these read ETPP…PALA and PSPP…PPLS. Residues 866–875 are compositionally biased toward low complexity; sequence PLATPSPQAP. Pro residues-rich tracts occupy residues 887 to 917, 926 to 997, and 1004 to 1015; these read FSPP…PSQA, LQVP…PPAS, and AKPPPQAPPALA. Composition is skewed to low complexity over residues 1029 to 1046, 1137 to 1146, and 1224 to 1239; these read FPGQ…MSPL, DSGPEGGAAA, and GKAA…SRSP. At serine 1310 the chain carries Phosphoserine.

This Homo sapiens (Human) protein is Proline-rich protein 36.